Here is a 76-residue protein sequence, read N- to C-terminus: uncharacterized protein (76 aa).

This is an uncharacterized protein from Methanocaldococcus jannaschii (strain ATCC 43067 / DSM 2661 / JAL-1 / JCM 10045 / NBRC 100440) (Methanococcus jannaschii).